The chain runs to 70 residues: Peptide BmKn1 (70 aa).

A signal peptide spans 1-23 (MKSQTFFLLFLVVLLLAISQSEA). The residue at position 36 (phenylalanine 36) is a Phenylalanine amide. Residues 40 to 70 (SMRDMDTMKYLYDPSLSAADLKTLQKLMENY) constitute a propeptide that is removed on maturation.

It belongs to the non-disulfide-bridged peptide (NDBP) superfamily. Short antimicrobial peptide (group 4) family. As to expression, expressed by the venom gland.

The protein localises to the secreted. It is found in the target cell membrane. Functionally, antibacterial peptide. The chain is Peptide BmKn1 from Olivierus martensii (Manchurian scorpion).